The following is a 371-amino-acid chain: tRNA-specific 2-thiouridylase MnmA (371 aa).

Residues 11–18 (GMSGGVDS) and methionine 37 each bind ATP. The interaction with target base in tRNA stretch occupies residues 97–99 (NPD). The Nucleophile role is filled by cysteine 102. The cysteines at positions 102 and 199 are disulfide-linked. Glycine 127 contacts ATP. An interaction with tRNA region spans residues 149–151 (KDQ). The active-site Cysteine persulfide intermediate is cysteine 199. The segment at 311 to 312 (RY) is interaction with tRNA.

The protein belongs to the MnmA/TRMU family.

Its subcellular location is the cytoplasm. It catalyses the reaction S-sulfanyl-L-cysteinyl-[protein] + uridine(34) in tRNA + AH2 + ATP = 2-thiouridine(34) in tRNA + L-cysteinyl-[protein] + A + AMP + diphosphate + H(+). Catalyzes the 2-thiolation of uridine at the wobble position (U34) of tRNA, leading to the formation of s(2)U34. In Idiomarina loihiensis (strain ATCC BAA-735 / DSM 15497 / L2-TR), this protein is tRNA-specific 2-thiouridylase MnmA.